Here is a 143-residue protein sequence, read N- to C-terminus: HTH-type transcriptional regulator MntR (143 aa).

One can recognise an HTH dtxR-type domain in the interval 1-63 (MPTPSMEDYL…YERYRGLVLT (63 aa)). Positions 8, 11, 77, 99, 102, and 103 each coordinate Mn(2+).

The protein belongs to the DtxR/MntR family. In terms of assembly, homodimer.

Its subcellular location is the cytoplasm. DNA binding is strongly activated by Mn(2+). Central regulator of manganese homeostasis. The protein is HTH-type transcriptional regulator MntR of Shouchella clausii (strain KSM-K16) (Alkalihalobacillus clausii).